We begin with the raw amino-acid sequence, 488 residues long: GTPase Der (488 aa).

EngA-type G domains are found at residues 3-166 and 201-374; these read PVVA…VSDG and IKLA…QCAT. GTP-binding positions include 9-16, 56-60, 118-121, 207-214, 254-258, and 319-322; these read GRPNVGKS, DTGGI, NKTD, DTAGV, and NKWD. The region spanning 375 to 459 is the KH-like domain; that stretch reads KRVSTALLTR…PIRIQFNEGA (85 aa).

This sequence belongs to the TRAFAC class TrmE-Era-EngA-EngB-Septin-like GTPase superfamily. EngA (Der) GTPase family. Associates with the 50S ribosomal subunit.

Functionally, GTPase that plays an essential role in the late steps of ribosome biogenesis. The protein is GTPase Der of Sodalis glossinidius (strain morsitans).